We begin with the raw amino-acid sequence, 263 residues long: Small ribosomal subunit protein eS4 (263 aa).

Positions 42–104 (LPLIIFLRNR…TGENFRLIYD (63 aa)) constitute an S4 RNA-binding domain.

The protein belongs to the eukaryotic ribosomal protein eS4 family.

In Cricetulus griseus (Chinese hamster), this protein is Small ribosomal subunit protein eS4 (RPS4).